Here is a 539-residue protein sequence, read N- to C-terminus: Phosphoenolpyruvate carboxykinase (ATP) (539 aa).

The substrate site is built by arginine 61, tyrosine 195, and lysine 201. ATP-binding positions include lysine 201, histidine 220, and 238-246 (GLSGTGKTT). Lysine 201 and histidine 220 together coordinate Mn(2+). A Mn(2+)-binding site is contributed by aspartate 259. ATP contacts are provided by glutamate 287, arginine 325, and threonine 450. Residue arginine 325 coordinates substrate.

This sequence belongs to the phosphoenolpyruvate carboxykinase (ATP) family. Requires Mn(2+) as cofactor.

Its subcellular location is the cytoplasm. The catalysed reaction is oxaloacetate + ATP = phosphoenolpyruvate + ADP + CO2. Its pathway is carbohydrate biosynthesis; gluconeogenesis. In terms of biological role, involved in the gluconeogenesis. Catalyzes the conversion of oxaloacetate (OAA) to phosphoenolpyruvate (PEP) through direct phosphoryl transfer between the nucleoside triphosphate and OAA. The polypeptide is Phosphoenolpyruvate carboxykinase (ATP) (Methylobacterium radiotolerans (strain ATCC 27329 / DSM 1819 / JCM 2831 / NBRC 15690 / NCIMB 10815 / 0-1)).